The sequence spans 334 residues: Aspartate carbamoyltransferase catalytic subunit (334 aa).

Residues arginine 71 and threonine 72 each coordinate carbamoyl phosphate. An L-aspartate-binding site is contributed by lysine 99. Positions 121, 151, and 154 each coordinate carbamoyl phosphate. L-aspartate-binding residues include arginine 184 and arginine 239. Glycine 280 and proline 281 together coordinate carbamoyl phosphate.

The protein belongs to the aspartate/ornithine carbamoyltransferase superfamily. ATCase family. In terms of assembly, heterododecamer (2C3:3R2) of six catalytic PyrB chains organized as two trimers (C3), and six regulatory PyrI chains organized as three dimers (R2).

The catalysed reaction is carbamoyl phosphate + L-aspartate = N-carbamoyl-L-aspartate + phosphate + H(+). The protein operates within pyrimidine metabolism; UMP biosynthesis via de novo pathway; (S)-dihydroorotate from bicarbonate: step 2/3. Its function is as follows. Catalyzes the condensation of carbamoyl phosphate and aspartate to form carbamoyl aspartate and inorganic phosphate, the committed step in the de novo pyrimidine nucleotide biosynthesis pathway. The protein is Aspartate carbamoyltransferase catalytic subunit of Pseudomonas fluorescens (strain SBW25).